The sequence spans 453 residues: Vitamin D3 receptor A (453 aa).

A DNA-binding region (nuclear receptor) is located at residues 53–128 (PRICGVCGDK…IGMMKEFILT (76 aa)). Residues C56, C59, C73, C76, C92, C98, C108, and C111 each coordinate Zn(2+). NR C4-type zinc fingers lie at residues 56 to 76 (CGVCGDKATGFHFNAMTCEGC) and 92 to 111 (CPFNGNCTITKDNRRHCQAC). The segment at 129–158 (DEEVQRKKDLIMKRKEEEAAREARKPRLSD) is hinge. The NR LBD domain occupies 159–449 (EQMQIINSLV…LTPLVLEVFG (291 aa)). Positions 175 and 265 each coordinate calcitriol. The tract at residues 274-292 (KMIPGFRDLTAEDQIALLK) is interaction with coactivator LXXLL motif. Calcitriol-binding residues include R302, S306, H333, and H423. The 9aaTAD signature appears at 442 to 450 (PLVLEVFGS).

It belongs to the nuclear hormone receptor family. NR1 subfamily. Homodimer in the absence of bound vitamin D3. Heterodimer with RXRA after vitamin D3 binding. Interacts with ncoa1 and possibly other coactivators, leading to a strong increase of transcription of target genes. Detected in embryo 24 to 48 hours after fertilization and in gastrula.

The protein resides in the nucleus. It localises to the cytoplasm. In terms of biological role, nuclear receptor for calcitriol, the active form of vitamin D3 which mediates the action of this vitamin on cells. Enters the nucleus upon vitamin D3 binding where it forms heterodimers with the retinoid X receptor/RXR. The VDR-RXR heterodimers bind to specific response elements on DNA and activate the transcription of vitamin D3-responsive target genes. Recruited to promoters via its interaction with BAZ1B/WSTF which mediates the interaction with acetylated histones, an essential step for VDR-promoter association. Plays a central role in calcium homeostasis. In Danio rerio (Zebrafish), this protein is Vitamin D3 receptor A (vdra).